A 191-amino-acid polypeptide reads, in one-letter code: Putative glutathione-dependent formaldehyde-activating enzyme (191 aa).

The region spanning 20–166 is the CENP-V/GFA domain; sequence FSGGTLRCHC…FKSVGLETYD (147 aa). Zn(2+)-binding residues include cysteine 27, cysteine 29, cysteine 48, cysteine 50, cysteine 53, cysteine 95, and cysteine 98.

Belongs to the Gfa family. Zn(2+) is required as a cofactor.

It catalyses the reaction S-(hydroxymethyl)glutathione = glutathione + formaldehyde. The protein operates within one-carbon metabolism; formaldehyde degradation; formate from formaldehyde (glutathione route): step 1/3. In terms of biological role, catalyzes the condensation of formaldehyde and glutathione to S-hydroxymethylglutathione. This is Putative glutathione-dependent formaldehyde-activating enzyme from Colletotrichum graminicola (strain M1.001 / M2 / FGSC 10212) (Maize anthracnose fungus).